Consider the following 86-residue polypeptide: F(1)-ATPase inhibitor STF1, mitochondrial (86 aa).

Residues Met1–Tyr23 constitute a mitochondrion transit peptide. A Phosphoserine modification is found at Ser24.

The protein belongs to the ATPase inhibitor family. In terms of assembly, monomer and homodimer. Monomeric at pH 5.0 and dimeric at either pH 6.5 or 8.0. The protein aggregates increasingly strongly with increasing pH.

It localises to the mitochondrion. In terms of biological role, endogenous low-affinity ATPase inhibitor, which inhibits specifically the reverse ATPase reaction of mitochondrial F(1)F(0)-type ATP synthase. Found to stabilize, together with STF2, a complex of intrinsic ATPase inhibitor INH1 and proton-translocating ATPase in mitochondrial membranes. Binds directly to purified F1-ATPase. The sequence is that of F(1)-ATPase inhibitor STF1, mitochondrial (STF1) from Saccharomyces cerevisiae (strain ATCC 204508 / S288c) (Baker's yeast).